Consider the following 378-residue polypeptide: Beta sliding clamp (378 aa).

It belongs to the beta sliding clamp family. In terms of assembly, forms a ring-shaped head-to-tail homodimer around DNA which binds and tethers DNA polymerases and other proteins to the DNA. The DNA replisome complex has a single clamp-loading complex (3 tau and 1 each of delta, delta', psi and chi subunits) which binds 3 Pol III cores (1 core on the leading strand and 2 on the lagging strand) each with a beta sliding clamp dimer. Additional proteins in the replisome are other copies of gamma, psi and chi, Ssb, DNA helicase and RNA primase. Interacts with YabA, and via YabA, with DnaA. During sporulation probably interacts with SirA.

It localises to the cytoplasm. The protein resides in the nucleoid. Its function is as follows. Confers DNA tethering and processivity to DNA polymerases and other proteins. Acts as a clamp, forming a ring around DNA (a reaction catalyzed by the clamp-loading complex) which diffuses in an ATP-independent manner freely and bidirectionally along dsDNA. Initially characterized for its ability to contact the catalytic subunit of DNA polymerase III (Pol III), a complex, multichain enzyme responsible for most of the replicative synthesis in bacteria; Pol III exhibits 3'-5' exonuclease proofreading activity. The beta chain is required for initiation of replication as well as for processivity of DNA replication. Overexpression in vivo stimulates inititation of DNA replication from oriC. Increased levels of DnaN remove YabA from its association with DnaA on the chromosome, allowing DnaA to bind to its targets. Its interaction with DnaA probably serves as a sink to prevent excessive replication initiation. The protein is Beta sliding clamp of Bacillus subtilis (strain 168).